Reading from the N-terminus, the 120-residue chain is Jacalin-related lectin 39 (120 aa).

Residues 6–120 (SRDHADFVAH…KRTFDFGGFN (115 aa)) enclose the Jacalin-type lectin domain.

Belongs to the jacalin lectin family.

The protein is Jacalin-related lectin 39 (JAL39) of Arabidopsis thaliana (Mouse-ear cress).